Here is a 549-residue protein sequence, read N- to C-terminus: Glutamyl-tRNA(Gln) amidotransferase subunit B, chloroplastic/mitochondrial (549 aa).

It belongs to the GatB/GatE family. GatB subfamily. In terms of assembly, subunit of the heterotrimeric GatCAB amidotransferase (AdT) complex, composed of A, B and C subunits.

It is found in the mitochondrion. The protein resides in the plastid. The protein localises to the chloroplast. It catalyses the reaction L-glutamyl-tRNA(Gln) + L-glutamine + ATP + H2O = L-glutaminyl-tRNA(Gln) + L-glutamate + ADP + phosphate + H(+). Its function is as follows. Allows the formation of correctly charged Gln-tRNA(Gln) through the transamidation of misacylated Glu-tRNA(Gln) in chloroplasts and mitochondria. The reaction takes place in the presence of glutamine and ATP through an activated gamma-phospho-Glu-tRNA(Gln). This is Glutamyl-tRNA(Gln) amidotransferase subunit B, chloroplastic/mitochondrial from Ricinus communis (Castor bean).